A 116-amino-acid chain; its full sequence is Nitrogen regulatory PII-like protein (116 aa).

It belongs to the P(II) protein family. As to quaternary structure, needs to interact with NrgA in order to localize correctly to the membrane.

It localises to the cell membrane. In terms of biological role, required for full induction of the nrgAB operon under conditions of ammonium limitation. This chain is Nitrogen regulatory PII-like protein (nrgB), found in Bacillus subtilis (strain 168).